Reading from the N-terminus, the 113-residue chain is Transmembrane protein 256 (113 aa).

The N-terminal stretch at 1–29 is a signal peptide; that stretch reads MAGVGAAFRRLGALSGAGALGLASYGAHG. Residues 30–63 lie on the Extracellular side of the membrane; the sequence is AQFPDAYGKELFDKANKHHFLHSLALLGVPSCRK. Lys43 carries the post-translational modification N6-acetyllysine. Residues 64 to 84 form a helical membrane-spanning segment; sequence PVWAGLLLASGTTLFCTSFYY. The Cytoplasmic portion of the chain corresponds to 85-92; that stretch reads QALSGDTS. The chain crosses the membrane as a helical span at residues 93–113; that stretch reads IQTLGPVGGSLLILGWLALAF.

The protein belongs to the TMEM256 family.

It is found in the membrane. The sequence is that of Transmembrane protein 256 (Tmem256) from Mus musculus (Mouse).